The primary structure comprises 349 residues: Cytokine response-modifying protein B (349 aa).

An N-terminal signal peptide occupies residues 1–22 (MKSVLYLYILFLSCIIINGRDA). The segment at 1 to 160 (MKSVLYLYIL…SPCGFGTYSH (160 aa)) is TNF-binding. 2 TNFR-Cys repeats span residues 31-66 (KCKD…TQCT) and 67-108 (PCGS…NRIC). 6 cysteine pairs are disulfide-bonded: Cys32–Cys43, Cys44–Cys57, Cys47–Cys65, Cys68–Cys83, Cys86–Cys100, and Cys90–Cys108. Asn101, Asn173, Asn189, Asn215, and Asn248 each carry an N-linked (GlcNAc...) asparagine; by host glycan. Residues 161–349 (TVSSADKCEP…ITNSKPTRFL (189 aa)) are chemokine-binding.

The protein belongs to the orthopoxvirus OPG002 family. As to quaternary structure, homodimer. Interacts with host TNF, LTA, CCL28, CCL25, CXCL12, CXCL13 and CXCl14.

The protein localises to the secreted. Functionally, inhibits host immune defense by binding to host TNF and various chemokines in the extracellular space. Binds host CC chemokines (beta chemokines) and CXC chemokines (alpha chemokines). The chain is Cytokine response-modifying protein B (OPG002) from Variola virus (isolate Human/India/Ind3/1967) (VARV).